The primary structure comprises 290 residues: Lipoyl synthase (290 aa).

Residues cysteine 44, cysteine 49, cysteine 55, cysteine 70, cysteine 74, cysteine 77, and serine 282 each coordinate [4Fe-4S] cluster. Positions 56-271 (WGEGTATFMI…ELLGKEMGFR (216 aa)) constitute a Radical SAM core domain.

The protein belongs to the radical SAM superfamily. Lipoyl synthase family. It depends on [4Fe-4S] cluster as a cofactor.

It localises to the cytoplasm. The enzyme catalyses [[Fe-S] cluster scaffold protein carrying a second [4Fe-4S](2+) cluster] + N(6)-octanoyl-L-lysyl-[protein] + 2 oxidized [2Fe-2S]-[ferredoxin] + 2 S-adenosyl-L-methionine + 4 H(+) = [[Fe-S] cluster scaffold protein] + N(6)-[(R)-dihydrolipoyl]-L-lysyl-[protein] + 4 Fe(3+) + 2 hydrogen sulfide + 2 5'-deoxyadenosine + 2 L-methionine + 2 reduced [2Fe-2S]-[ferredoxin]. It functions in the pathway protein modification; protein lipoylation via endogenous pathway; protein N(6)-(lipoyl)lysine from octanoyl-[acyl-carrier-protein]: step 2/2. In terms of biological role, catalyzes the radical-mediated insertion of two sulfur atoms into the C-6 and C-8 positions of the octanoyl moiety bound to the lipoyl domains of lipoate-dependent enzymes, thereby converting the octanoylated domains into lipoylated derivatives. This chain is Lipoyl synthase, found in Flavobacterium psychrophilum (strain ATCC 49511 / DSM 21280 / CIP 103535 / JIP02/86).